A 175-amino-acid polypeptide reads, in one-letter code: SKP1-like protein 20 (175 aa).

The tract at residues 117-175 (ILAANYLNIKGLLDLTCQTVADMIKGKTPEEIRKTFNIKNDFTPEEEEEVRRENQWAFE) is interaction with the F-box domain of F-box proteins.

It belongs to the SKP1 family. Part of a SCF (SKP1-CUL1-F-box protein) E3 ubiquitin-protein ligase complex. Interacts with rice black streaked dwarf virus RBSDV protein P7-2. Is able to form the SCF complex together with CUL1 and the viral P7-2 protein. Interacts with D3.

The protein localises to the nucleus. The protein operates within protein modification; protein ubiquitination. In terms of biological role, involved in ubiquitination and subsequent proteasomal degradation of target proteins. Together with CUL1, a RING-box and a F-box protein, it forms a SCF E3 ubiquitin ligase complex. The functional specificity of this complex depends on the type of F-box protein. In the SCF complex, it serves as an adapter that links the F-box protein to CUL1. The protein is SKP1-like protein 20 of Oryza sativa subsp. japonica (Rice).